Reading from the N-terminus, the 98-residue chain is Protein S100-A13 (98 aa).

An EF-hand domain is found at 18 to 53; it reads TTFFTFARQEGRKDSLSVNEFKELVTQQLPHLLKDV. Residues Ser-32, Glu-37, Asp-64, Asn-66, Asp-68, Glu-70, and Glu-75 each contribute to the Ca(2+) site. Phosphoserine is present on Ser-32.

This sequence belongs to the S-100 family. As to quaternary structure, homodimer. Part of a copper-dependent multiprotein complex containing S100A13, FGF1 and SYT1. Interacts with FGF1 and SYT1. Interacts with IL1A. Expressed in heart and skeletal muscle.

Its subcellular location is the cytoplasm. It localises to the secreted. Plays a role in the export of proteins that lack a signal peptide and are secreted by an alternative pathway. Binds two calcium ions per subunit. Binds one copper ion. Binding of one copper ion does not interfere with calcium binding. Required for the copper-dependent stress-induced export of IL1A and FGF1. The calcium-free protein binds to lipid vesicles containing phosphatidylserine, but not to vesicles containing phosphatidylcholine. In Homo sapiens (Human), this protein is Protein S100-A13 (S100A13).